The primary structure comprises 786 residues: LPS-assembly protein LptD (786 aa).

The N-terminal stretch at 1 to 24 (MSFTSRSLLASFTGCLLYGTPAIA) is a signal peptide.

The protein belongs to the LptD family. As to quaternary structure, component of the lipopolysaccharide transport and assembly complex. Interacts with LptE and LptA.

It is found in the cell outer membrane. Its function is as follows. Together with LptE, is involved in the assembly of lipopolysaccharide (LPS) at the surface of the outer membrane. The protein is LPS-assembly protein LptD of Aliivibrio fischeri (strain ATCC 700601 / ES114) (Vibrio fischeri).